Reading from the N-terminus, the 433-residue chain is Eukaryotic peptide chain release factor subunit 1 (433 aa).

Gln182 is subject to N5-methylglutamine. At Ser425 the chain carries Phosphoserine.

It belongs to the eukaryotic release factor 1 family. As to quaternary structure, component of the eRF1-eRF3-GTP ternary complex, composed of sup45/eRF1, sup35/eRF3 and GTP.

It is found in the cytoplasm. Functionally, component of the eRF1-eRF3-GTP ternary complex, a ternary complex that mediates translation termination in response to the termination codons. The eRF1-eRF3-GTP complex binds to a stop codon in the ribosomal A-site. Sup45/eRF1 is responsible for stop codon recognition and inducing hydrolysis of peptidyl-tRNA. Following GTP hydrolysis by sup35/eRF3, sup35/eRF3 dissociates, permitting sup45/eRF1 to accommodate fully in the A-site. The polypeptide is Eukaryotic peptide chain release factor subunit 1 (sup45) (Schizosaccharomyces pombe (strain 972 / ATCC 24843) (Fission yeast)).